The sequence spans 124 residues: Small ribosomal subunit protein uS13 (124 aa).

The segment at 89-124 (GRRHRQGLPVRGQRTKTNARTRKGPKRTVAGKKKAK) is disordered. Residues 101–124 (QRTKTNARTRKGPKRTVAGKKKAK) are compositionally biased toward basic residues.

The protein belongs to the universal ribosomal protein uS13 family. As to quaternary structure, part of the 30S ribosomal subunit. Forms a loose heterodimer with protein S19. Forms two bridges to the 50S subunit in the 70S ribosome.

Its function is as follows. Located at the top of the head of the 30S subunit, it contacts several helices of the 16S rRNA. In the 70S ribosome it contacts the 23S rRNA (bridge B1a) and protein L5 of the 50S subunit (bridge B1b), connecting the 2 subunits; these bridges are implicated in subunit movement. Contacts the tRNAs in the A and P-sites. This chain is Small ribosomal subunit protein uS13, found in Nocardioides sp. (strain ATCC BAA-499 / JS614).